The sequence spans 737 residues: Ribosome-releasing factor 2, mitochondrial (737 aa).

The transit peptide at 1–36 (MLCNRLHKAAFAARLRPRLPATVASCRQVHNSDGTI) directs the protein to the mitochondrion. Residues 39-318 (KRIRNIGILA…SVLNFLPAPS (280 aa)) form the tr-type G domain. Residues 48 to 55 (AHIDAGKT), 112 to 116 (DTPGH), and 166 to 169 (NKMD) each bind GTP.

It belongs to the TRAFAC class translation factor GTPase superfamily. Classic translation factor GTPase family. EF-G/EF-2 subfamily.

The protein localises to the mitochondrion. In terms of biological role, mitochondrial GTPase that mediates the disassembly of ribosomes from messenger RNA at the termination of mitochondrial protein biosynthesis. Not involved in the GTP-dependent ribosomal translocation step during translation elongation. This is Ribosome-releasing factor 2, mitochondrial from Anopheles gambiae (African malaria mosquito).